Reading from the N-terminus, the 214-residue chain is Putative ras-related protein Rab-5B (214 aa).

Residue 56-63 (GEMNTGKT) coordinates GTP. The Effector region signature appears at 77–85 (TDSTIGAAF). Residues 103–107 (DTAGQ) and 161–164 (NKVD) each bind GTP.

Belongs to the small GTPase superfamily. Rab family. This sequence lacks the C-terminal cysteine motifs subject to isoprenylation in other Rab proteins.

This is Putative ras-related protein Rab-5B (rab5B) from Dictyostelium discoideum (Social amoeba).